Here is a 79-residue protein sequence, read N- to C-terminus: DNA-directed RNA polymerase subunit omega (79 aa).

This sequence belongs to the RNA polymerase subunit omega family. In terms of assembly, in cyanobacteria the RNAP catalytic core is composed of 2 alpha, 1 beta, 1 beta', 1 gamma and 1 omega subunit. When a sigma factor is associated with the core the holoenzyme is formed, which can initiate transcription.

The catalysed reaction is RNA(n) + a ribonucleoside 5'-triphosphate = RNA(n+1) + diphosphate. Promotes RNA polymerase assembly. Latches the N- and C-terminal regions of the beta' subunit thereby facilitating its interaction with the beta and alpha subunits. The chain is DNA-directed RNA polymerase subunit omega from Synechococcus sp. (strain JA-3-3Ab) (Cyanobacteria bacterium Yellowstone A-Prime).